A 175-amino-acid chain; its full sequence is Transcriptional repressor NrdR (175 aa).

Residues cysteine 3–cysteine 32 fold into a zinc finger. The ATP-cone domain occupies leucine 47–glutamine 137.

Belongs to the NrdR family. The cofactor is Zn(2+).

In terms of biological role, negatively regulates transcription of bacterial ribonucleotide reductase nrd genes and operons by binding to NrdR-boxes. This chain is Transcriptional repressor NrdR, found in Dehalococcoides mccartyi (strain ATCC BAA-2266 / KCTC 15142 / 195) (Dehalococcoides ethenogenes (strain 195)).